Reading from the N-terminus, the 161-residue chain is RNA pyrophosphohydrolase (161 aa).

A Nudix hydrolase domain is found at P12–K154. A Nudix box motif is present at residues G46–G67.

This sequence belongs to the Nudix hydrolase family. RppH subfamily. The cofactor is a divalent metal cation.

In terms of biological role, accelerates the degradation of transcripts by removing pyrophosphate from the 5'-end of triphosphorylated RNA, leading to a more labile monophosphorylated state that can stimulate subsequent ribonuclease cleavage. The chain is RNA pyrophosphohydrolase from Rickettsia typhi (strain ATCC VR-144 / Wilmington).